The sequence spans 479 residues: GTPase Der (479 aa).

EngA-type G domains follow at residues 3-167 and 191-366; these read FTLA…EAAA and LQIA…ATWN. GTP contacts are provided by residues 9–16, 56–60, 119–122, 197–204, 244–248, and 309–312; these read GRPNVGKS, DTAGL, NKAE, GRPNAGKS, DTAGM, and NKWD. In terms of domain architecture, KH-like spans 367–453; it reads TRISTARLNQ…RLWMRSQADD (87 aa). The segment at 449–479 is disordered; it reads SQADDNPYKNRKKSTPSRLNKHVRKGETKKG. Residues 457–472 are compositionally biased toward basic residues; the sequence is KNRKKSTPSRLNKHVR.

This sequence belongs to the TRAFAC class TrmE-Era-EngA-EngB-Septin-like GTPase superfamily. EngA (Der) GTPase family. Associates with the 50S ribosomal subunit.

GTPase that plays an essential role in the late steps of ribosome biogenesis. This chain is GTPase Der, found in Jannaschia sp. (strain CCS1).